The sequence spans 249 residues: MANDPIHQFQVSRWIPIDVGGVDLSFTNVSAFMVATVVLASGFLYLTSSGRGLIPTRLQSVSEMAYEFVATSLRDSAGSKGMKFFPFVFSLFMFVLVANFIGLFPYFYTVTSQIIVTFALSLLVIGTVIFYGFFKHGFGFLKLFVPSGVPGIIVPLVVLIEIISFLSRPISLSVRLFANMLAGHITLKVFAGFVVSLSSLGALGIGGTVLPLLMTVAITALEFLVAFLQAYVFTVLTCMYINDAVHPGH.

The next 6 membrane-spanning stretches (helical) occupy residues 26–46 (FTNV…FLYL), 84–104 (FFPF…IGLF), 114–134 (IIVT…YGFF), 143–163 (LFVP…IEII), 185–205 (ITLK…ALGI), and 208–228 (TVLP…VAFL).

This sequence belongs to the ATPase A chain family. As to quaternary structure, F-type ATPases have 2 components, CF(1) - the catalytic core - and CF(0) - the membrane proton channel. CF(1) has five subunits: alpha(3), beta(3), gamma(1), delta(1), epsilon(1). CF(0) has three main subunits: a(1), b(2) and c(9-12). The alpha and beta chains form an alternating ring which encloses part of the gamma chain. CF(1) is attached to CF(0) by a central stalk formed by the gamma and epsilon chains, while a peripheral stalk is formed by the delta and b chains.

The protein localises to the cell inner membrane. Key component of the proton channel; it plays a direct role in the translocation of protons across the membrane. This chain is ATP synthase subunit a, found in Brucella ovis (strain ATCC 25840 / 63/290 / NCTC 10512).